Here is a 231-residue protein sequence, read N- to C-terminus: Ribonuclease 3 (231 aa).

The RNase III domain maps to 7–135 (IQAIESKLNF…ILGAVYLDGG (129 aa)). Glutamate 48 is a binding site for Mg(2+). The active site involves aspartate 52. Residues asparagine 121 and glutamate 124 each coordinate Mg(2+). The active site involves glutamate 124. The 70-residue stretch at 160-229 (NPKNRLQQFT…AKQALSTHDN (70 aa)) folds into the DRBM domain.

The protein belongs to the ribonuclease III family. Homodimer. Mg(2+) serves as cofactor.

The protein resides in the cytoplasm. It catalyses the reaction Endonucleolytic cleavage to 5'-phosphomonoester.. Its function is as follows. Digests double-stranded RNA. Involved in the processing of primary rRNA transcript to yield the immediate precursors to the large and small rRNAs (23S and 16S). Processes some mRNAs, and tRNAs when they are encoded in the rRNA operon. Processes pre-crRNA and tracrRNA of type II CRISPR loci if present in the organism. In Chlamydia trachomatis serovar L2 (strain ATCC VR-902B / DSM 19102 / 434/Bu), this protein is Ribonuclease 3.